Here is a 40-residue protein sequence, read N- to C-terminus: Small polypeptide DEVIL 6 (40 aa).

Residues 9 to 40 (SSSRGLGGVLREQRAKLYIIKRCVVMLLCWQD) form a required for DVL/RTFL small polypeptide activity region. Residues 12–28 (RGLGGVLREQRAKLYII) form a helical membrane-spanning segment.

It belongs to the DVL/RTFL small polypeptides family.

It localises to the cell membrane. Its function is as follows. Small polypeptide acting as a regulatory molecule which coordinates cellular responses required for differentiation, growth and development, probably by restricting polar cell proliferation in lateral organs and coordinating socket cell recruitment and differentiation at trichome sites. The protein is Small polypeptide DEVIL 6 of Arabidopsis thaliana (Mouse-ear cress).